Reading from the N-terminus, the 343-residue chain is Holliday junction branch migration complex subunit RuvB (343 aa).

The interval 1–186 (MVMARKSDTL…FQIQERLEYY (186 aa)) is large ATPase domain (RuvB-L). ATP-binding positions include Leu-25, Arg-26, Gly-67, Lys-70, Thr-71, Ser-72, 133-135 (EDF), Arg-176, Tyr-186, and Arg-223. Position 71 (Thr-71) interacts with Mg(2+). Residues 187–257 (DAKALESILH…LAQKSLDRLG (71 aa)) are small ATPAse domain (RuvB-S). Residues 260–343 (ASGLDSMDRK…PPPTPQGSLF (84 aa)) are head domain (RuvB-H). Arg-296, Arg-315, and Arg-320 together coordinate DNA.

Belongs to the RuvB family. In terms of assembly, homohexamer. Forms an RuvA(8)-RuvB(12)-Holliday junction (HJ) complex. HJ DNA is sandwiched between 2 RuvA tetramers; dsDNA enters through RuvA and exits via RuvB. An RuvB hexamer assembles on each DNA strand where it exits the tetramer. Each RuvB hexamer is contacted by two RuvA subunits (via domain III) on 2 adjacent RuvB subunits; this complex drives branch migration. In the full resolvosome a probable DNA-RuvA(4)-RuvB(12)-RuvC(2) complex forms which resolves the HJ.

It localises to the cytoplasm. The enzyme catalyses ATP + H2O = ADP + phosphate + H(+). The RuvA-RuvB-RuvC complex processes Holliday junction (HJ) DNA during genetic recombination and DNA repair, while the RuvA-RuvB complex plays an important role in the rescue of blocked DNA replication forks via replication fork reversal (RFR). RuvA specifically binds to HJ cruciform DNA, conferring on it an open structure. The RuvB hexamer acts as an ATP-dependent pump, pulling dsDNA into and through the RuvAB complex. RuvB forms 2 homohexamers on either side of HJ DNA bound by 1 or 2 RuvA tetramers; 4 subunits per hexamer contact DNA at a time. Coordinated motions by a converter formed by DNA-disengaged RuvB subunits stimulates ATP hydrolysis and nucleotide exchange. Immobilization of the converter enables RuvB to convert the ATP-contained energy into a lever motion, pulling 2 nucleotides of DNA out of the RuvA tetramer per ATP hydrolyzed, thus driving DNA branch migration. The RuvB motors rotate together with the DNA substrate, which together with the progressing nucleotide cycle form the mechanistic basis for DNA recombination by continuous HJ branch migration. Branch migration allows RuvC to scan DNA until it finds its consensus sequence, where it cleaves and resolves cruciform DNA. This Myxococcus xanthus (strain DK1622) protein is Holliday junction branch migration complex subunit RuvB.